Reading from the N-terminus, the 724-residue chain is N-alpha-acetyltransferase 35, NatC auxiliary subunit (724 aa).

The protein belongs to the MAK10 family. Component of the N-terminal acetyltransferase C (NatC) complex.

The protein localises to the cytoplasm. In terms of biological role, auxillary component of the N-terminal acetyltransferase C (NatC) complex which catalyzes acetylation of N-terminal methionine residues. N-terminal acetylation protects proteins from ubiquitination and degradation by the N-end rule pathway. Regulates cell proliferation during embryonic development. This is N-alpha-acetyltransferase 35, NatC auxiliary subunit (naa35) from Danio rerio (Zebrafish).